Here is a 93-residue protein sequence, read N- to C-terminus: Small ribosomal subunit protein uS19 (93 aa).

Residues 73–93 form a disordered region; it reads EFSPTRTYRGHNKKDKKIQKK. Over residues 80-93 the composition is skewed to basic residues; it reads YRGHNKKDKKIQKK.

This sequence belongs to the universal ribosomal protein uS19 family.

Its function is as follows. Protein S19 forms a complex with S13 that binds strongly to the 16S ribosomal RNA. This is Small ribosomal subunit protein uS19 (rpsS) from Aster yellows phytoplasma.